A 215-amino-acid chain; its full sequence is FMN-dependent NADH:quinone oxidoreductase 1 (215 aa).

The protein belongs to the azoreductase type 1 family. In terms of assembly, homodimer. The cofactor is FMN.

It carries out the reaction 2 a quinone + NADH + H(+) = 2 a 1,4-benzosemiquinone + NAD(+). It catalyses the reaction N,N-dimethyl-1,4-phenylenediamine + anthranilate + 2 NAD(+) = 2-(4-dimethylaminophenyl)diazenylbenzoate + 2 NADH + 2 H(+). In terms of biological role, quinone reductase that provides resistance to thiol-specific stress caused by electrophilic quinones. Its function is as follows. Also exhibits azoreductase activity. Catalyzes the reductive cleavage of the azo bond in aromatic azo compounds to the corresponding amines. This is FMN-dependent NADH:quinone oxidoreductase 1 from Lactiplantibacillus plantarum (strain ATCC BAA-793 / NCIMB 8826 / WCFS1) (Lactobacillus plantarum).